A 333-amino-acid polypeptide reads, in one-letter code: Phosphate acyltransferase (333 aa).

Belongs to the PlsX family. As to quaternary structure, homodimer. Probably interacts with PlsY.

The protein resides in the cytoplasm. The enzyme catalyses a fatty acyl-[ACP] + phosphate = an acyl phosphate + holo-[ACP]. The protein operates within lipid metabolism; phospholipid metabolism. Catalyzes the reversible formation of acyl-phosphate (acyl-PO(4)) from acyl-[acyl-carrier-protein] (acyl-ACP). This enzyme utilizes acyl-ACP as fatty acyl donor, but not acyl-CoA. This Aliarcobacter butzleri (strain RM4018) (Arcobacter butzleri) protein is Phosphate acyltransferase.